Here is a 710-residue protein sequence, read N- to C-terminus: Protein CNGC15a (710 aa).

6 helical membrane passes run 85 to 105 (IFLA…YLPV), 115 to 135 (SIGL…FYII), 174 to 194 (LWSD…AVIP), 207 to 226 (VVRL…IYPL), 248 to 268 (YLTL…LLSI), and 368 to 388 (AEIN…ALLI). Position 474–559 (474–559 (LFDQMDDRML…WALDPRPTAV (86 aa))) interacts with a nucleoside 3',5'-cyclic phosphate.

Belongs to the cyclic nucleotide-gated cation channel (TC 1.A.1.5) family. In terms of assembly, interacts (via N-terminus) with DMI1 (via c-terminus). The Nod factor has no effect on this interaction, implying that the complex is maintained after activation. In terms of tissue distribution, expressed in roots, stems, leaves, flowers and pods.

It is found in the nucleus membrane. In terms of biological role, cyclic nucleotide-gated channel involved in the establishment of both rhizobial and mycorrhizal associations. Required for full activation of nuclear-localized Ca(2+) oscillations by Nod and Myc factors. Simultaneous activation of the K(+)-permeable channel DMI1 and the Ca(2+) channel CNGC15 can give rise to sustained Ca(2+) oscillations. May function during fertilization in both female and male gametophytic Ca(2+) signaling. This is Protein CNGC15a from Medicago truncatula (Barrel medic).